Reading from the N-terminus, the 371-residue chain is Queuine tRNA-ribosyltransferase (371 aa).

Asp90 (nucleophile) is an active-site residue. Catalysis depends on Asp90, which acts as the Proton acceptor. Substrate is bound by residues 90–94, Ser91, Asp144, Gln189, and Gly215; that span reads DSGGF. The tract at residues 246–252 is RNA binding; it reads GVGTPEN. The Nucleophile role is filled by Asp265. The RNA binding; important for wobble base 34 recognition stretch occupies residues 270–274; sequence TRNAR. Cys303, Cys305, Cys308, and His334 together coordinate Zn(2+).

The protein belongs to the queuine tRNA-ribosyltransferase family. Homodimer. Within each dimer, one monomer is responsible for RNA recognition and catalysis, while the other monomer binds to the replacement base PreQ1. It depends on Zn(2+) as a cofactor.

The catalysed reaction is 7-aminomethyl-7-carbaguanine + guanosine(34) in tRNA = 7-aminomethyl-7-carbaguanosine(34) in tRNA + guanine. It functions in the pathway tRNA modification; tRNA-queuosine biosynthesis. Its function is as follows. Catalyzes the base-exchange of a guanine (G) residue with the queuine precursor 7-aminomethyl-7-deazaguanine (PreQ1) at position 34 (anticodon wobble position) in tRNAs with GU(N) anticodons (tRNA-Asp, -Asn, -His and -Tyr). Catalysis occurs through a double-displacement mechanism. The nucleophile active site attacks the C1' of nucleotide 34 to detach the guanine base from the RNA, forming a covalent enzyme-RNA intermediate. The proton acceptor active site deprotonates the incoming PreQ1, allowing a nucleophilic attack on the C1' of the ribose to form the product. After dissociation, two additional enzymatic reactions on the tRNA convert PreQ1 to queuine (Q), resulting in the hypermodified nucleoside queuosine (7-(((4,5-cis-dihydroxy-2-cyclopenten-1-yl)amino)methyl)-7-deazaguanosine). The chain is Queuine tRNA-ribosyltransferase from Helicobacter pylori (strain ATCC 700392 / 26695) (Campylobacter pylori).